Reading from the N-terminus, the 321-residue chain is N-acetyllactosaminide alpha-1,3-galactosyltransferase-like 1 (321 aa).

Residues 1–6 lie on the Cytoplasmic side of the membrane; sequence MQYKKE. The helical; Signal-anchor for type II membrane protein transmembrane segment at 7–24 threads the bilayer; the sequence is TLLLILLAILLALTQRYS. The Lumenal portion of the chain corresponds to 25–321; it reads RTKDHLQKMY…IKVAWQPRIT (297 aa). 2 N-linked (GlcNAc...) asparagine glycosylation sites follow: Asn87 and Asn99. Substrate is bound by residues 95–100, 187–189, and 209–212; these read FATGNF, TAN, and HAWW. Glu277 serves as the catalytic Nucleophile.

It belongs to the glycosyltransferase 6 family. The cofactor is Mn(2+).

It is found in the golgi apparatus. The protein resides in the golgi stack membrane. The catalysed reaction is a beta-D-galactosyl-(1-&gt;4)-N-acetyl-beta-D-glucosaminyl derivative + UDP-alpha-D-galactose = an alpha-D-galactosyl-(1-&gt;3)-beta-D-galactosyl-(1-&gt;4)-N-acetyl-beta-D-glucosaminyl derivative + UDP + H(+). It participates in protein modification; protein glycosylation. Synthesizes the galactose-alpha(1,3)-galactose group by catalyzing the transfer of a galactose residue, with an alpha-1,3 linkage, on terminal lactosaminide (Gal-beta-1,4-GlcNAc-R) disaccharide borne by a glycoprotein or a glycolipid. This is N-acetyllactosaminide alpha-1,3-galactosyltransferase-like 1 (Ggta1l1) from Rattus norvegicus (Rat).